Consider the following 216-residue polypeptide: Golgi to ER traffic protein 1 (216 aa).

The Lumenal segment spans residues 1 to 9 (MFDISSSNL). Residues 10–29 (LISVLVVLFAKQLINAVGKA) form a helical membrane-spanning segment. Residues 30–116 (TLENIGWSAY…YISKYIGYMI (87 aa)) lie on the Cytoplasmic side of the membrane. Positions 54 to 105 (LDQKNVELAKVSKERKSISAQDQYARWTKLNRQFDKLTGEINKLKEETSASR) form a coiled coil. The helical transmembrane segment at 117–137 (LVTTTLPIWFFRVWFRKAVLF) threads the bilayer. Residues 138 to 161 (YFPTGVLPHYLEWFLALPFITTGG) are Lumenal-facing. The chain crosses the membrane as a helical span at residues 162-178 (VGLTIWMSAVNNVVSSV). The Cytoplasmic portion of the chain corresponds to 179–216 (IFLVKFPFEKEVPFPSKEVGNEKTSINKEEVSGTPAAN). The interval 193-216 (PSKEVGNEKTSINKEEVSGTPAAN) is disordered. Positions 197-209 (VGNEKTSINKEEV) are enriched in basic and acidic residues.

This sequence belongs to the WRB/GET1 family. As to quaternary structure, component of the Golgi to ER traffic (GET) complex, which is composed of GET1, GET2 and GET3. Within the complex, GET1 and GET2 form a heterotetramer which is stabilized by phosphatidylinositol binding and which binds to the GET3 homodimer.

The protein localises to the endoplasmic reticulum membrane. It localises to the golgi apparatus membrane. Its function is as follows. Required for the post-translational delivery of tail-anchored (TA) proteins to the endoplasmic reticulum. Together with GET2, acts as a membrane receptor for soluble GET3, which recognizes and selectively binds the transmembrane domain of TA proteins in the cytosol. The GET complex cooperates with the HDEL receptor ERD2 to mediate the ATP-dependent retrieval of resident ER proteins that contain a C-terminal H-D-E-L retention signal from the Golgi to the ER. This is Golgi to ER traffic protein 1 from Debaryomyces hansenii (strain ATCC 36239 / CBS 767 / BCRC 21394 / JCM 1990 / NBRC 0083 / IGC 2968) (Yeast).